The sequence spans 400 residues: S-adenosylmethionine synthase (400 aa).

H15 lines the ATP pocket. D17 is a Mg(2+) binding site. Residue E43 participates in K(+) binding. 2 residues coordinate L-methionine: E56 and Q99. Residues 99–109 (QSLEIGAGVDT) are flexible loop. Residues 174–176 (DGK), D254, 260–261 (RK), A277, and K281 each bind ATP. An L-methionine-binding site is contributed by D254. Residue K285 coordinates L-methionine.

This sequence belongs to the AdoMet synthase family. As to quaternary structure, homotetramer; dimer of dimers. Mg(2+) serves as cofactor. K(+) is required as a cofactor.

It localises to the cytoplasm. The enzyme catalyses L-methionine + ATP + H2O = S-adenosyl-L-methionine + phosphate + diphosphate. Its pathway is amino-acid biosynthesis; S-adenosyl-L-methionine biosynthesis; S-adenosyl-L-methionine from L-methionine: step 1/1. Functionally, catalyzes the formation of S-adenosylmethionine (AdoMet) from methionine and ATP. The overall synthetic reaction is composed of two sequential steps, AdoMet formation and the subsequent tripolyphosphate hydrolysis which occurs prior to release of AdoMet from the enzyme. The sequence is that of S-adenosylmethionine synthase from Corynebacterium kroppenstedtii (strain DSM 44385 / JCM 11950 / CIP 105744 / CCUG 35717).